A 175-amino-acid polypeptide reads, in one-letter code: Small ribosomal subunit protein bS16 (175 aa).

It belongs to the bacterial ribosomal protein bS16 family.

The chain is Small ribosomal subunit protein bS16 from Cytophaga hutchinsonii (strain ATCC 33406 / DSM 1761 / CIP 103989 / NBRC 15051 / NCIMB 9469 / D465).